A 287-amino-acid polypeptide reads, in one-letter code: Nucleotide-binding protein VIBHAR_03667 (287 aa).

8–15 contributes to the ATP binding site; that stretch reads GHSGAGKS. GTP is bound at residue 56-59; that stretch reads DIRN.

This sequence belongs to the RapZ-like family.

Displays ATPase and GTPase activities. This is Nucleotide-binding protein VIBHAR_03667 from Vibrio campbellii (strain ATCC BAA-1116).